Here is a 131-residue protein sequence, read N- to C-terminus: Large ribosomal subunit protein bL19 (131 aa).

Residues 112-131 (KSARIAERAGGPKASASTEA) are disordered.

It belongs to the bacterial ribosomal protein bL19 family.

Functionally, this protein is located at the 30S-50S ribosomal subunit interface and may play a role in the structure and function of the aminoacyl-tRNA binding site. This chain is Large ribosomal subunit protein bL19, found in Caulobacter vibrioides (strain ATCC 19089 / CIP 103742 / CB 15) (Caulobacter crescentus).